The primary structure comprises 117 residues: Putative pterin-4-alpha-carbinolamine dehydratase (117 aa).

It belongs to the pterin-4-alpha-carbinolamine dehydratase family.

It carries out the reaction (4aS,6R)-4a-hydroxy-L-erythro-5,6,7,8-tetrahydrobiopterin = (6R)-L-erythro-6,7-dihydrobiopterin + H2O. This Aeromonas salmonicida (strain A449) protein is Putative pterin-4-alpha-carbinolamine dehydratase.